Here is a 322-residue protein sequence, read N- to C-terminus: Deoxyhypusine hydroxylase (322 aa).

Fe cation-binding residues include histidine 78, glutamate 79, histidine 111, and glutamate 112. 4 HEAT-like PBS-type repeats span residues 109–135, 203–229, 234–260, and 267–293; these read VRHE…CLKN, LRYR…GFND, FKHE…VLGR, and VRHE…YLND. Positions 236, 237, 269, and 270 each coordinate Fe cation.

Belongs to the deoxyhypusine hydroxylase family. Requires Fe(2+) as cofactor.

Its subcellular location is the cytoplasm. The protein resides in the nucleus. It catalyses the reaction [eIF5A protein]-deoxyhypusine + AH2 + O2 = [eIF5A protein]-hypusine + A + H2O. The protein operates within protein modification; eIF5A hypusination. Catalyzes the hydroxylation of the N(6)-(4-aminobutyl)-L-lysine intermediate to form hypusine, an essential post-translational modification only found in mature eIF-5A factor. The sequence is that of Deoxyhypusine hydroxylase from Candida glabrata (strain ATCC 2001 / BCRC 20586 / JCM 3761 / NBRC 0622 / NRRL Y-65 / CBS 138) (Yeast).